The following is a 478-amino-acid chain: Protein nucleotidyltransferase YdiU (478 aa).

ATP is bound by residues G84, G86, R87, K107, D119, G120, R170, and R177. D246 (proton acceptor) is an active-site residue. Mg(2+) contacts are provided by N247 and D256. D256 is an ATP binding site.

Belongs to the SELO family. Mg(2+) serves as cofactor. The cofactor is Mn(2+).

The enzyme catalyses L-seryl-[protein] + ATP = 3-O-(5'-adenylyl)-L-seryl-[protein] + diphosphate. It carries out the reaction L-threonyl-[protein] + ATP = 3-O-(5'-adenylyl)-L-threonyl-[protein] + diphosphate. It catalyses the reaction L-tyrosyl-[protein] + ATP = O-(5'-adenylyl)-L-tyrosyl-[protein] + diphosphate. The catalysed reaction is L-histidyl-[protein] + UTP = N(tele)-(5'-uridylyl)-L-histidyl-[protein] + diphosphate. The enzyme catalyses L-seryl-[protein] + UTP = O-(5'-uridylyl)-L-seryl-[protein] + diphosphate. It carries out the reaction L-tyrosyl-[protein] + UTP = O-(5'-uridylyl)-L-tyrosyl-[protein] + diphosphate. In terms of biological role, nucleotidyltransferase involved in the post-translational modification of proteins. It can catalyze the addition of adenosine monophosphate (AMP) or uridine monophosphate (UMP) to a protein, resulting in modifications known as AMPylation and UMPylation. This Escherichia coli O7:K1 (strain IAI39 / ExPEC) protein is Protein nucleotidyltransferase YdiU.